Reading from the N-terminus, the 117-residue chain is Large ribosomal subunit protein uL22 (117 aa).

This sequence belongs to the universal ribosomal protein uL22 family. As to quaternary structure, part of the 50S ribosomal subunit.

Functionally, this protein binds specifically to 23S rRNA; its binding is stimulated by other ribosomal proteins, e.g. L4, L17, and L20. It is important during the early stages of 50S assembly. It makes multiple contacts with different domains of the 23S rRNA in the assembled 50S subunit and ribosome. In terms of biological role, the globular domain of the protein is located near the polypeptide exit tunnel on the outside of the subunit, while an extended beta-hairpin is found that lines the wall of the exit tunnel in the center of the 70S ribosome. The protein is Large ribosomal subunit protein uL22 of Synechococcus elongatus (strain ATCC 33912 / PCC 7942 / FACHB-805) (Anacystis nidulans R2).